The following is a 389-amino-acid chain: Succinyl-diaminopimelate desuccinylase (389 aa).

His72 provides a ligand contact to Zn(2+). Asp74 is a catalytic residue. Asp105 is a binding site for Zn(2+). Glu144 functions as the Proton acceptor in the catalytic mechanism. Positions 145, 173, and 362 each coordinate Zn(2+).

It belongs to the peptidase M20A family. DapE subfamily. Homodimer. Zn(2+) serves as cofactor. The cofactor is Co(2+).

It catalyses the reaction N-succinyl-(2S,6S)-2,6-diaminopimelate + H2O = (2S,6S)-2,6-diaminopimelate + succinate. The protein operates within amino-acid biosynthesis; L-lysine biosynthesis via DAP pathway; LL-2,6-diaminopimelate from (S)-tetrahydrodipicolinate (succinylase route): step 3/3. Catalyzes the hydrolysis of N-succinyl-L,L-diaminopimelic acid (SDAP), forming succinate and LL-2,6-diaminopimelate (DAP), an intermediate involved in the bacterial biosynthesis of lysine and meso-diaminopimelic acid, an essential component of bacterial cell walls. In Nitrobacter hamburgensis (strain DSM 10229 / NCIMB 13809 / X14), this protein is Succinyl-diaminopimelate desuccinylase.